A 472-amino-acid polypeptide reads, in one-letter code: 3-isopropylmalate dehydratase large subunit (472 aa).

[4Fe-4S] cluster-binding residues include C353, C414, and C417.

It belongs to the aconitase/IPM isomerase family. LeuC type 1 subfamily. As to quaternary structure, heterodimer of LeuC and LeuD. [4Fe-4S] cluster serves as cofactor.

It carries out the reaction (2R,3S)-3-isopropylmalate = (2S)-2-isopropylmalate. It participates in amino-acid biosynthesis; L-leucine biosynthesis; L-leucine from 3-methyl-2-oxobutanoate: step 2/4. Its function is as follows. Catalyzes the isomerization between 2-isopropylmalate and 3-isopropylmalate, via the formation of 2-isopropylmaleate. The sequence is that of 3-isopropylmalate dehydratase large subunit from Psychrobacter cryohalolentis (strain ATCC BAA-1226 / DSM 17306 / VKM B-2378 / K5).